The sequence spans 159 residues: 2-C-methyl-D-erythritol 2,4-cyclodiphosphate synthase (159 aa).

2 residues coordinate a divalent metal cation: aspartate 10 and histidine 12. Residues 10–12 (DVH) and 36–37 (HS) contribute to the 4-CDP-2-C-methyl-D-erythritol 2-phosphate site. Histidine 44 is an a divalent metal cation binding site. 4-CDP-2-C-methyl-D-erythritol 2-phosphate-binding positions include 58 to 60 (DIG) and arginine 144.

This sequence belongs to the IspF family. Homotrimer. Requires a divalent metal cation as cofactor.

It carries out the reaction 4-CDP-2-C-methyl-D-erythritol 2-phosphate = 2-C-methyl-D-erythritol 2,4-cyclic diphosphate + CMP. It functions in the pathway isoprenoid biosynthesis; isopentenyl diphosphate biosynthesis via DXP pathway; isopentenyl diphosphate from 1-deoxy-D-xylulose 5-phosphate: step 4/6. Functionally, involved in the biosynthesis of isopentenyl diphosphate (IPP) and dimethylallyl diphosphate (DMAPP), two major building blocks of isoprenoid compounds. Catalyzes the conversion of 4-diphosphocytidyl-2-C-methyl-D-erythritol 2-phosphate (CDP-ME2P) to 2-C-methyl-D-erythritol 2,4-cyclodiphosphate (ME-CPP) with a corresponding release of cytidine 5-monophosphate (CMP). The sequence is that of 2-C-methyl-D-erythritol 2,4-cyclodiphosphate synthase from Paraburkholderia phymatum (strain DSM 17167 / CIP 108236 / LMG 21445 / STM815) (Burkholderia phymatum).